Reading from the N-terminus, the 320-residue chain is Ferrochelatase (320 aa).

Fe cation-binding residues include His194 and Glu275.

It belongs to the ferrochelatase family. Monomer.

Its subcellular location is the cytoplasm. It catalyses the reaction heme b + 2 H(+) = protoporphyrin IX + Fe(2+). Its pathway is porphyrin-containing compound metabolism; protoheme biosynthesis; protoheme from protoporphyrin-IX: step 1/1. Functionally, catalyzes the ferrous insertion into protoporphyrin IX. The protein is Ferrochelatase of Shigella boydii serotype 18 (strain CDC 3083-94 / BS512).